Here is an 87-residue protein sequence, read N- to C-terminus: Small ribosomal subunit protein uS15c (87 aa).

The protein belongs to the universal ribosomal protein uS15 family. As to quaternary structure, part of the 30S ribosomal subunit.

Its subcellular location is the plastid. It localises to the chloroplast. This chain is Small ribosomal subunit protein uS15c (rps15), found in Nicotiana tabacum (Common tobacco).